The following is a 381-amino-acid chain: Cytochrome b (381 aa).

The next 4 membrane-spanning stretches (helical) occupy residues Phe34–Met54, Trp78–Ile99, Trp114–Leu134, and Phe179–Leu199. Heme b is bound by residues His84 and His98. 2 residues coordinate heme b: His183 and His197. Residue His202 coordinates a ubiquinone. 4 consecutive transmembrane segments (helical) span residues Tyr227–Met247, Leu289–His309, Leu321–Gly341, and Phe348–Pro368.

The protein belongs to the cytochrome b family. As to quaternary structure, the cytochrome bc1 complex contains 3 respiratory subunits (MT-CYB, CYC1 and UQCRFS1), 2 core proteins (UQCRC1 and UQCRC2) and probably 6 low-molecular weight proteins. It depends on heme b as a cofactor.

Its subcellular location is the mitochondrion inner membrane. Its function is as follows. Component of the ubiquinol-cytochrome c reductase complex (complex III or cytochrome b-c1 complex) that is part of the mitochondrial respiratory chain. The b-c1 complex mediates electron transfer from ubiquinol to cytochrome c. Contributes to the generation of a proton gradient across the mitochondrial membrane that is then used for ATP synthesis. The protein is Cytochrome b (mt-cyb) of Sphyrna tiburo tiburo (Hammerhead shark).